The primary structure comprises 5125 residues: Usherin (5125 aa).

Positions 1 to 33 are cleaved as a signal peptide; sequence MYYLALSSGFLGQAIKTSILAYLASVLLAASQG. 7 N-linked (GlcNAc...) asparagine glycosylation sites follow: Asn-120, Asn-229, Asn-257, Asn-273, Asn-414, Asn-447, and Asn-468. Residues 273–513 enclose the Laminin N-terminal domain; the sequence is NVSLTNREIL…AVDEITIIGR (241 aa). Disulfide bonds link Cys-514–Cys-523, Cys-516–Cys-532, Cys-534–Cys-545, Cys-548–Cys-568, Cys-571–Cys-580, Cys-573–Cys-601, Cys-604–Cys-613, Cys-616–Cys-634, Cys-637–Cys-651, Cys-639–Cys-658, Cys-660–Cys-669, Cys-672–Cys-687, Cys-690–Cys-704, Cys-692–Cys-711, Cys-713–Cys-722, Cys-725–Cys-740, Cys-743–Cys-755, Cys-745–Cys-762, Cys-764–Cys-773, Cys-776–Cys-788, Cys-791–Cys-804, Cys-793–Cys-811, Cys-813–Cys-822, Cys-825–Cys-840, Cys-843–Cys-857, Cys-845–Cys-864, Cys-866–Cys-875, Cys-878–Cys-893, Cys-896–Cys-909, Cys-898–Cys-916, Cys-918–Cys-927, Cys-930–Cys-944, Cys-947–Cys-959, Cys-949–Cys-966, Cys-981–Cys-995, Cys-998–Cys-1010, Cys-1000–Cys-1017, Cys-1019–Cys-1028, and Cys-1031–Cys-1046. Laminin EGF-like domains are found at residues 514-570, 571-636, 637-689, 690-742, 743-790, 791-842, 843-895, 896-946, 947-997, and 998-1048; these read CQCH…NCKP, CQCH…VCKH, CDCN…CCRP, CDCN…GCEP, CHCN…ACEV, CDCN…LCLP, CNCE…GCQA, CDCD…GCLP, CLCH…RCRP, and CHCH…ACSK. A glycan (N-linked (GlcNAc...) asparagine) is linked at Asn-646. Residues Asn-835 and Asn-852 are each glycosylated (N-linked (GlcNAc...) asparagine). N-linked (GlcNAc...) asparagine glycosylation is present at Asn-884. Asn-940 carries N-linked (GlcNAc...) asparagine glycosylation. N-linked (GlcNAc...) asparagine glycosylation is present at Asn-1007. 4 consecutive Fibronectin type-III domains span residues 1054-1142, 1146-1240, 1241-1356, and 1357-1461; these read PPPR…TKPE, GHLN…APPQ, RQEP…SAPV, and FMAA…AAPA. Residues Asn-1067, Asn-1149, Asn-1170, Asn-1221, Asn-1304, and Asn-1381 are each glycosylated (N-linked (GlcNAc...) asparagine). 2 Laminin G-like domains span residues 1510 to 1697 and 1702 to 1879; these read TKGT…WEGC and EEGV…QDGC. 2 disulfides stabilise this stretch: Cys-1660-Cys-1697 and Cys-1850-Cys-1879. Fibronectin type-III domains are found at residues 1857-1943, 1945-2042, 2043-2132, 2133-2230, 2231-2318, 2319-2421, 2425-2519, 2520-2613, 2614-2709, 2713-2806, 2807-2910, 2914-3005, 3009-3099, 3380-3485, 3486-3577, 3580-3670, 3672-3762, 3765-3852, 3853-3950, 3951-4054, 4055-4143, 4144-4251, 4252-4344, 4345-4432, 4433-4517, 4518-4620, 4625-4720, 4721-4813, and 4814-4916; these read TRGA…SAPH, VPTP…TPQE, APQE…LPPE, RVDP…TVPE, GVPA…APPE, GTVN…MPPG, GLLS…TTED, KPGP…TPEG, IPGP…TRPS, GVQP…THPA, LPQE…TLAG, RGAT…TWEE, GMRP…TPSG, ATEE…TRED, VPQG…TRGV, SVPP…AAPQ, VWVT…TPED, PPCN…TLEA, APVG…TLEA, PPQD…SAPS, GLMN…APPD, SQMA…APPD, GLSP…ASPA, GVSP…APPE, DMDP…TSPS, APSG…IPPL, PHLE…TGPA, PPEG…THPA, and PPSG…TKKE. Residues 1930–1950 form a disordered region; that stretch reads SDWSRGRTLGSAPHSVPTPSR.

In terms of assembly, interacts with collagen IV and fibronectin via its laminin EGF-like domains. Interaction with collagen may be required for stable integration into the basement membrane. Interacts with NINL. Interacts with USH1C. Interacts (via the cytoplasmic region) with PDZD7. Component of USH2 complex, composed of ADGRV1, PDZD7, USH2A and WHRN. Interacts with ADGRV1/MASS1 (via N-terminal PDZ domain). Interacts (via the cytoplasmic region) with WHRN. Interacts (via the cytoplasmic region) with VEZT and MYO7A (via MyTH4-FERM domains); the interaction associates VEZT with the USH2 complex at the stereocilia base. Present in the synaptic terminals of inner ear hair cells (at protein level). Predominantly expressed in the retina and cochlea. Weakly expressed in brain and kidney. Detectable from E17 in the neural epithelium, but not in the retinal pigment epithelium (RPE) of the developing retina. After birth, it is expressed at P7 and remains expressed during adulthood.

The protein localises to the secreted. It localises to the cell projection. It is found in the stereocilium membrane. The protein resides in the photoreceptor inner segment. Its function is as follows. Involved in hearing and vision as member of the USH2 complex. In the inner ear, required for the hair bundle ankle formation, which connects growing stereocilia in developing cochlear hair cells. In retina photoreceptors, the USH2 complex is required for the maintenance of periciliary membrane complex that seems to play a role in regulating intracellular protein transport. This Rattus norvegicus (Rat) protein is Usherin (Ush2a).